The sequence spans 500 residues: Pyruvate kinase 1 (500 aa).

Ser-2 carries the post-translational modification N-acetylserine. Phosphoserine is present on residues Ser-9 and Ser-16. Residue Thr-31 is modified to Phosphothreonine. Position 49 (Arg-49) interacts with substrate. Asn-51 and Ser-53 together coordinate K(+). Position 51 to 54 (51 to 54 (NFSH)) interacts with ATP. A Phosphoserine modification is found at Ser-70. Positions 84 and 85 each coordinate K(+). Arg-91 lines the ATP pocket. Glycyl lysine isopeptide (Lys-Gly) (interchain with G-Cter in URM1) cross-links involve residues Lys-119, Lys-124, Lys-161, Lys-164, and Lys-166. Lys-177 lines the ATP pocket. The residue at position 184 (Thr-184) is a Phosphothreonine. A Glycyl lysine isopeptide (Lys-Gly) (interchain with G-Cter in ubiquitin) cross-link involves residue Lys-204. Ser-213 carries the post-translational modification Phosphoserine. Lys-240 lines the substrate pocket. Glu-242 is a Mn(2+) binding site. Lys-255 is covalently cross-linked (Glycyl lysine isopeptide (Lys-Gly) (interchain with G-Cter in ubiquitin)). Substrate-binding residues include Gly-265 and Asp-266. Asp-266 is a binding site for Mn(2+). Residue Lys-292 forms a Glycyl lysine isopeptide (Lys-Gly) (interchain with G-Cter in URM1) linkage. Thr-298 is a binding site for substrate. The residue at position 316 (Ser-316) is a Phosphoserine. Lys-394 participates in a covalent cross-link: Glycyl lysine isopeptide (Lys-Gly) (interchain with G-Cter in URM1). 402–407 (STSGTT) lines the beta-D-fructose 1,6-bisphosphate pocket. Residue Cys-418 is modified to Cysteine persulfide. Lys-446 participates in a covalent cross-link: Glycyl lysine isopeptide (Lys-Gly) (interchain with G-Cter in ubiquitin); alternate. Lys-446 is covalently cross-linked (Glycyl lysine isopeptide (Lys-Gly) (interchain with G-Cter in URM1); alternate). Ser-450 bears the Phosphoserine mark. 2 residues coordinate beta-D-fructose 1,6-bisphosphate: Trp-452 and Arg-459. At Thr-478 the chain carries Phosphothreonine. Gly-484 contacts beta-D-fructose 1,6-bisphosphate.

The protein belongs to the pyruvate kinase family. Homotetramer. Mg(2+) serves as cofactor. It depends on K(+) as a cofactor. In terms of processing, conjugated to URM1, a ubiquitin-like protein, in response to oxidative stresses. The attachment of URM1 to lysine residues exclusively depends on the presence of a peroxidatic cysteine in the target protein, with low specificity for the particular residue, motif, or structural context at which urmylation can occur. The URM1-conjugation reaction is mechanistically and directly coupled to the process of cysteine persulfidation, transfering the sulfur atom of the URM1 thiocarboxyl group to redox-active cysteine residues in the target protein if it is exposed to oxidative conditions. Persulfidated on specific redox-active cysteine residues. Persulfidation (also called protein S-sulfhydration) may provide a molecular mechanism that enables cells to protect vulnerable cysteine residues from reactive oxygen species (ROS) under stress conditions.

It carries out the reaction pyruvate + ATP = phosphoenolpyruvate + ADP + H(+). It functions in the pathway carbohydrate degradation; glycolysis; pyruvate from D-glyceraldehyde 3-phosphate: step 5/5. With respect to regulation, the activity is regulated by glucose levels. Activated by fructose-1,6-bisphosphate. This chain is Pyruvate kinase 1 (CDC19), found in Saccharomyces cerevisiae (strain ATCC 204508 / S288c) (Baker's yeast).